The sequence spans 290 residues: ATP synthase gamma chain (290 aa).

Belongs to the ATPase gamma chain family. In terms of assembly, F-type ATPases have 2 components, CF(1) - the catalytic core - and CF(0) - the membrane proton channel. CF(1) has five subunits: alpha(3), beta(3), gamma(1), delta(1), epsilon(1). CF(0) has three main subunits: a, b and c.

It is found in the cell inner membrane. Produces ATP from ADP in the presence of a proton gradient across the membrane. The gamma chain is believed to be important in regulating ATPase activity and the flow of protons through the CF(0) complex. This chain is ATP synthase gamma chain, found in Chlorobium luteolum (strain DSM 273 / BCRC 81028 / 2530) (Pelodictyon luteolum).